Consider the following 340-residue polypeptide: Selenide, water dikinase (340 aa).

Cys13 is an active-site residue. Residues Lys16 and 43 to 45 contribute to the ATP site; that span reads ASD. Position 46 (Asp46) interacts with Mg(2+). ATP is bound by residues Asp63, Asp86, and 133–135; that span reads GHS. Asp86 is a Mg(2+) binding site. Asp221 is a Mg(2+) binding site.

The protein belongs to the selenophosphate synthase 1 family. Class I subfamily. In terms of assembly, homodimer. Mg(2+) is required as a cofactor.

The catalysed reaction is hydrogenselenide + ATP + H2O = selenophosphate + AMP + phosphate + 2 H(+). Synthesizes selenophosphate from selenide and ATP. The chain is Selenide, water dikinase from Desulfitobacterium hafniense (strain DSM 10664 / DCB-2).